Consider the following 156-residue polypeptide: Small ribosomal subunit protein uS7 (156 aa).

The protein belongs to the universal ribosomal protein uS7 family. In terms of assembly, part of the 30S ribosomal subunit. Contacts proteins S9 and S11.

Its function is as follows. One of the primary rRNA binding proteins, it binds directly to 16S rRNA where it nucleates assembly of the head domain of the 30S subunit. Is located at the subunit interface close to the decoding center, probably blocks exit of the E-site tRNA. The protein is Small ribosomal subunit protein uS7 of Rhizobium meliloti (strain 1021) (Ensifer meliloti).